The following is a 764-amino-acid chain: E3 ubiquitin-protein ligase CBL-B-B (764 aa).

Over residues 1 to 19 (MASSSSSSSNSSTSSSALS) the composition is skewed to low complexity. Residues 1-27 (MASSSSSSSNSSTSSSALSGRLPGARS) are disordered. Residues 48–180 (PPKQAAADRR…KAIFPSGQFQ (133 aa)) are 4H. The 309-residue stretch at 48–356 (PPKQAAADRR…GRSYNPDLTD (309 aa)) folds into the Cbl-PTB domain. Residues 181 to 253 (GDTFRITKAD…FEFDIFARLF (73 aa)) are EF-hand-like. Residues D234, T236, N238, Y240, and E245 each contribute to the Ca(2+) site. The interval 254 to 356 (QPWSSILRNW…GRSYNPDLTD (103 aa)) is SH2-like. R299 is a 4-O-phospho-L-tyrosine binding site. The interval 357 to 385 (LCEPTPHDHIKVTQEQYELYCEMGSTFQL) is linker. An RING-type zinc finger spans residues 386-425 (CKICAENDKDVKIEPCGHLMCTSCLTSWQESDGQGCPFCR). Disordered regions lie at residues 482 to 583 (MNER…SRTC) and 707 to 726 (KVRN…SSHP). Over residues 485–498 (RQNSPVTSPGSSPL) the composition is skewed to polar residues. The span at 556–578 (LPAPPPPLREPPPPPERPPPIPP) shows a compositional bias: pro residues.

Interacts with several SH3 domain-containing proteins and with poly-ubiquitinated proteins.

Its subcellular location is the cytoplasm. It catalyses the reaction S-ubiquitinyl-[E2 ubiquitin-conjugating enzyme]-L-cysteine + [acceptor protein]-L-lysine = [E2 ubiquitin-conjugating enzyme]-L-cysteine + N(6)-ubiquitinyl-[acceptor protein]-L-lysine.. The protein operates within protein modification; protein ubiquitination. E3 ubiquitin-protein ligase which accepts ubiquitin from specific E2 ubiquitin-conjugating enzymes, and transfers it to substrates, generally promoting their degradation by the proteasome. The polypeptide is E3 ubiquitin-protein ligase CBL-B-B (cblb-b) (Xenopus laevis (African clawed frog)).